We begin with the raw amino-acid sequence, 1148 residues long: MSQQSIQKVLVANRGEIAIRIFRACTELNIRTVAVYSKEDSGSYHRYKADEAYLVGEGKKPIDAYLDIEGIIDIAKRNKVDAIHPGYGFLSENIHFARRCEEEGIVFIGPKSEHLDMFGDKVKAREQAEKAGIPVIPGSDGPAETLEAVEQFGQANGYPIIIKASLGGGGRGMRIVRSESEVKEAYERAKSEAKAAFGNDEVYVEKLIENPKHIEVQVIGDKQGNVVHLFERDCSVQRRHQKVIEVAPSVSLSPELRDQICEAAVALAKNVNYINAGTVEFLVANNEFYFIEVNPRVQVEHTITEMITGVDIVQTQILVAQGHSLHSKKVNIPEQKDIFTIGYAIQSRVTTEDPQNDFMPDTGKIMAYRSGGGFGVRLDTGNSFQGAVITPYYDSLLVKLSTWALTFEQAAAKMVRNLQEFRIRGIKTNIPFLENVAKHEKFLTGQYDTSFIDTTPELFNFPKQKDRGTKMLTYIGNVTVNGFPGIGKKEKPAFDKPLGVKVDVDQQPARGTKQILDEKGAEGLANWVKEQKSVLLTDTTFRDAHQSLLATRIRSHDLKKIANPTAALWPELFSMEMWGGATFDVAYRFLKEDPWKRLEDLRKEVPNTLFQMLLRSSNAVGYTNYPDNVIKEFVKQSAQSGIDVFRIFDSLNWVKGMTLAIDAVRDTGKVAEAAICYTGDILDKNRTKYDLAYYTSMAKELEAAGAHILGIKDMAGLLKPQAAYELVSALKETIDIPVHLHTHDTSGNGIYMYAKAVEAGVDIIDVAVSSMAGLTSQPSASGFYHAMEGNDRRPEMNVQGVELLSQYWESVRKYYSEFESGMKSPHTEIYEHEMPGGQYSNLQQQAKGVGLGDRWNEVKEMYRRVNDMFGDIVKVTPSSKVVGDMALYMVQNNLTEKDVYEKGESLDFPDSVVELFKGNIGQPHGGFPEKLQKLILKGQEPITVRPGELLEPVSFEAIKQEFKEQHNLEISDQDAVAYALYPKVFTDYVKTTESYGDISVLDTPTFFYGMTLGEEIEVEIERGKTLIVKLISIGEPQPDATRVVYFELNGQPREVVIKDESIKSSVQERLKADRTNPSHIAASMPGTVIKVLAEAGTKVNKGDHLMINEAMKMETTVQAPFSGTIKQVHVKNGEPIQTGDLLLEIEKA.

In terms of domain architecture, Biotin carboxylation spans Met1 to Glu457. The ATP site is built by Lys121, Glu205, and His240. Positions Arg125–Gln321 constitute an ATP-grasp domain. Lys242 is an active-site residue. The region spanning Val534–Glu802 is the Pyruvate carboxyltransferase domain. Substrate-binding positions include Arg542–Gln546 and Arg615. Position 543 (Asp543) interacts with a divalent metal cation. A divalent metal cation-binding residues include Lys712, His741, and His743. The residue at position 712 (Lys712) is an N6-carboxylysine. Residue Thr876 participates in substrate binding. A Biotinyl-binding domain is found at Lys1071–Glu1146. Position 1112 is an N6-biotinyllysine (Lys1112).

As to quaternary structure, homotetramer. At very low potassium concentrations, when intracellular levels of c-di-AMP are low, interacts with apo-DarB. c-di-AMP inhibits the binding of DarB to PYC. Does not bind directly c-di-AMP. Requires biotin as cofactor.

It carries out the reaction hydrogencarbonate + pyruvate + ATP = oxaloacetate + ADP + phosphate + H(+). With respect to regulation, activated by the cyclic di-AMP (c-di-AMP) receptor DarB in the absence of c-di-AMP. Allosterically activated by acetyl-CoA. Inhibited by the biotin-complexing protein avidin. Its function is as follows. Catalyzes a 2-step reaction, involving the ATP-dependent carboxylation of the covalently attached biotin in the first step and the transfer of the carboxyl group to pyruvate in the second, leading to oxaloacetate production. Fulfills an anaplerotic function in B.subtilis as it is necessary for growth on glucose, but is not required for sporulation. This chain is Pyruvate carboxylase (pyc), found in Bacillus subtilis (strain 168).